Here is a 471-residue protein sequence, read N- to C-terminus: MSIQIFNTLKREKEPFKPLKDGEVKMYVCGPTVYNYIHIGNARPIIVFDTVRRYFTYRGYDVKFVSNFTDVDDKLIRAANELKLTVPEVADRFIGAYFDDVDQLNVAKATVNPRVTENMDEIIQLISTLIEKGYAYESAGDVYFRTKKFKDYGKLSGQELSELQHGARVEYNERKQDELDFTLWKAAKPGEIFWESPFGNGRPGWHIECSALAKKYLGDTIDIHAGGQDLVFPHHEDEIAQSEAATGKTFAKYWMHNAFLNIDGEKMSKSLGNFITLHDVLKDNDPNVIRFFMLSVHYRKPITLNDAILEDAKNGLERLMIAYQNIDHRIQTDDGEYVEETHEDEWLEQLTELKQAFEDDMDDDFNTANAITTFHELAKRANIYLSKETVSINVLREFLSMMRLFAEVLGLKLENTQTDSLDDSEVEALIEERLQARNERNFARADEIRDILKEKDIILEDTAQGTRFRRG.

Position 29 (Cys29) interacts with Zn(2+). Positions 31–41 (PTVYNYIHIGN) match the 'HIGH' region motif. Cys209, His234, and Glu238 together coordinate Zn(2+). A 'KMSKS' region motif is present at residues 266-270 (KMSKS). Lys269 contributes to the ATP binding site.

It belongs to the class-I aminoacyl-tRNA synthetase family. In terms of assembly, monomer. It depends on Zn(2+) as a cofactor.

The protein resides in the cytoplasm. It catalyses the reaction tRNA(Cys) + L-cysteine + ATP = L-cysteinyl-tRNA(Cys) + AMP + diphosphate. This is Cysteine--tRNA ligase from Listeria innocua serovar 6a (strain ATCC BAA-680 / CLIP 11262).